The primary structure comprises 350 residues: Protein-glutamate methylesterase/protein-glutamine glutaminase 1 (350 aa).

A Response regulatory domain is found at 3–121; the sequence is KVLIVEDSPV…RDYDIRARDL (119 aa). 4-aspartylphosphate is present on Asp-54. Positions 148–342 constitute a CheB-type methylesterase domain; it reads PASGEPDIGK…PPEKIARVLV (195 aa). Catalysis depends on residues Ser-170, His-197, and Asp-290.

It belongs to the CheB family. Post-translationally, phosphorylated by CheA. Phosphorylation of the N-terminal regulatory domain activates the methylesterase activity.

It localises to the cytoplasm. The enzyme catalyses [protein]-L-glutamate 5-O-methyl ester + H2O = L-glutamyl-[protein] + methanol + H(+). The catalysed reaction is L-glutaminyl-[protein] + H2O = L-glutamyl-[protein] + NH4(+). In terms of biological role, involved in chemotaxis. Part of a chemotaxis signal transduction system that modulates chemotaxis in response to various stimuli. Catalyzes the demethylation of specific methylglutamate residues introduced into the chemoreceptors (methyl-accepting chemotaxis proteins or MCP) by CheR. Also mediates the irreversible deamidation of specific glutamine residues to glutamic acid. The protein is Protein-glutamate methylesterase/protein-glutamine glutaminase 1 of Syntrophus aciditrophicus (strain SB).